The following is a 552-amino-acid chain: Chaperonin GroEL (552 aa).

ATP-binding positions include threonine 30–proline 33, lysine 51, aspartate 87–threonine 91, glycine 415, and aspartate 499.

This sequence belongs to the chaperonin (HSP60) family. Forms a cylinder of 14 subunits composed of two heptameric rings stacked back-to-back. Interacts with the co-chaperonin GroES.

It localises to the cytoplasm. The catalysed reaction is ATP + H2O + a folded polypeptide = ADP + phosphate + an unfolded polypeptide.. Its function is as follows. Together with its co-chaperonin GroES, plays an essential role in assisting protein folding. The GroEL-GroES system forms a nano-cage that allows encapsulation of the non-native substrate proteins and provides a physical environment optimized to promote and accelerate protein folding. This chain is Chaperonin GroEL, found in Hamiltonella defensa subsp. Acyrthosiphon pisum (strain 5AT).